Reading from the N-terminus, the 165-residue chain is Large ribosomal subunit protein uL5 (165 aa).

The protein belongs to the universal ribosomal protein uL5 family. In terms of assembly, part of the 50S ribosomal subunit; contacts the 5S rRNA and probably tRNA. Forms a bridge to the 30S subunit in the 70S ribosome.

This is one of the proteins that bind and probably mediate the attachment of the 5S RNA into the large ribosomal subunit, where it forms part of the central protuberance. In the 70S ribosome it contacts protein S13 of the 30S subunit (bridge B1b), connecting the 2 subunits; this bridge is implicated in subunit movement. May contact the P site tRNA; the 5S rRNA and some of its associated proteins might help stabilize positioning of ribosome-bound tRNAs. This Methanoregula boonei (strain DSM 21154 / JCM 14090 / 6A8) protein is Large ribosomal subunit protein uL5.